The following is a 178-amino-acid chain: Photosystem II extrinsic protein V (178 aa).

Residues 1 to 38 (MFSKFFSLQKAFAAARRRLLILILVLGMAGYAWGPALA) form the signal peptide. Heme c-binding residues include Cys-71, Cys-74, His-75, and His-126.

This sequence belongs to the cytochrome c family. PsbV subfamily. PSII is composed of 1 copy each of membrane proteins PsbA, PsbB, PsbC, PsbD, PsbE, PsbF, PsbH, PsbI, PsbJ, PsbK, PsbL, PsbM, PsbT, PsbX, PsbY, PsbZ, Psb30/Ycf12, peripheral proteins PsbO, CyanoQ (PsbQ), PsbU, PsbV and a large number of cofactors. It forms dimeric complexes. Heme c is required as a cofactor.

It localises to the cellular thylakoid membrane. Functionally, one of the extrinsic, lumenal subunits of photosystem II (PSII). PSII is a light-driven water plastoquinone oxidoreductase, using light energy to abstract electrons from H(2)O, generating a proton gradient subsequently used for ATP formation. The extrinsic proteins stabilize the structure of photosystem II oxygen-evolving complex (OEC), the ion environment of oxygen evolution and protect the OEC against heat-induced inactivation. Low-potential cytochrome c that plays a role in the OEC of PSII. This Synechococcus sp. (strain JA-3-3Ab) (Cyanobacteria bacterium Yellowstone A-Prime) protein is Photosystem II extrinsic protein V.